The chain runs to 457 residues: F-box/LRR-repeat protein At3g62440 (457 aa).

The region spanning 1–49 is the F-box domain; that stretch reads MDRISNLPDEIICHIGSFLSAREAAFTTVLSKRWHNLFTIVPDLHFDSS. LRR repeat units follow at residues 53-79, 147-174, 177-202, 229-254, 283-310, and 337-362; these read GESLTDFVDRVMALPASSRVNKLSLKW, LSLGSGFAIDFLPENALLPALKTLSLYH, FYEFGRCAFKTLLASSPVLEELTVCG, WDAFDDSDFKSISFDTPSLAYLYYSD, WGKGDEKRFNPINLLHGLKNVETLNLYT, and LSNFCWSSMPMLIKKAPNLKTLNIDG.

The protein is F-box/LRR-repeat protein At3g62440 of Arabidopsis thaliana (Mouse-ear cress).